A 103-amino-acid polypeptide reads, in one-letter code: Small ribosomal subunit protein uS10 (103 aa).

The protein belongs to the universal ribosomal protein uS10 family. Part of the 30S ribosomal subunit.

In terms of biological role, involved in the binding of tRNA to the ribosomes. The sequence is that of Small ribosomal subunit protein uS10 from Hydrogenovibrio crunogenus (strain DSM 25203 / XCL-2) (Thiomicrospira crunogena).